Reading from the N-terminus, the 419-residue chain is MKLNFSLRLRVFNLNCWDIPYLSKHRADRMKRLGDFLNLENFDLALLEEVWSEQDFQYLRQRLSLTYPDAHYFRSGMIGSGLCVFSKHPIQEIFQHVYSLNGYPYMFHHGDWFCGKSVGLLVLRLSGLVLNAYVTHLHAEYSRQKDIYFAHRVAQAWELAQFIHHTSKNADVVLLCGDLNMHPKDLGCCLLKEWTGLHDAFVETEDFKGSDDGCTMVPKNCYVSQQDLGPFPSGIRIDYVLYKAVSEFHVCCETLKTTTGCDPHSDKPFSDHEALMATLYVKHSPPQEDPCTACGPLERSDLISVLREARTELGLGIAKARWWAAFSGYVIVWGLSLLVLLCVLAAGEEAREVAIILCIPSVGLVLVAGAVYLFHKQEAKGLCRAQAEMLHVLTRETETQDRGSEPHLAYCLQQEGDRA.

E49 is a binding site for Mg(2+). The Proton acceptor role is filled by H272. The next 2 membrane-spanning stretches (helical) occupy residues 326–346 (FSGYVIVWGLSLLVLLCVLAA) and 354–374 (AIILCIPSVGLVLVAGAVYLF).

The protein belongs to the neutral sphingomyelinase family. The cofactor is Mg(2+). Although widely expressed in all tissues examined, except the spleen, high enzymatic activity occurs only in the brain.

The protein localises to the cell membrane. It carries out the reaction a sphingomyelin + H2O = phosphocholine + an N-acylsphing-4-enine + H(+). The catalysed reaction is an N-(acyl)-sphingosylphosphocholine + H2O = an N-acyl-sphingoid base + phosphocholine + H(+). It catalyses the reaction 1-O-octadecyl-sn-glycero-3-phosphocholine + H2O = 1-O-octadecyl-sn-glycerol + phosphocholine + H(+). The enzyme catalyses 1-hexadecanoyl-sn-glycero-3-phosphocholine + H2O = 1-hexadecanoyl-sn-glycerol + phosphocholine + H(+). It carries out the reaction a sphingosylphosphocholine + H2O = a sphingoid base + phosphocholine + H(+). The catalysed reaction is 1-O-hexadecyl-sn-glycero-3-phosphocholine + H2O = 1-O-hexadecyl-sn-glycerol + phosphocholine + H(+). It participates in lipid metabolism; sphingolipid metabolism. Activated by arachidonic acid. In terms of biological role, catalyzes, at least in vitro, the hydrolysis of sphingomyelin to form ceramide and phosphocholine. Also hydrolyzes 1-O-alkyl-2-lyso-sn-glycero-3-phosphocholine (lyso-platelet-activating factor) in vivo. Also acts on 1-acyl-2-lyso-sn-glycero-3-phosphocholine (lyso-PC) and sphingosylphosphocholine. This is Sphingomyelin phosphodiesterase 2 from Mus musculus (Mouse).